Reading from the N-terminus, the 434-residue chain is ATP phosphoribosyltransferase regulatory subunit (434 aa).

A disordered region spans residues 1–48 (MYGRGSGAEHSRGSGAEHFWDPRPEASSTVSSSLRPPSGARDLLPREV). Residues 27 to 38 (SSTVSSSLRPPS) are compositionally biased toward low complexity.

It belongs to the class-II aminoacyl-tRNA synthetase family. HisZ subfamily. In terms of assembly, heteromultimer composed of HisG and HisZ subunits.

It localises to the cytoplasm. Its pathway is amino-acid biosynthesis; L-histidine biosynthesis; L-histidine from 5-phospho-alpha-D-ribose 1-diphosphate: step 1/9. Its function is as follows. Required for the first step of histidine biosynthesis. May allow the feedback regulation of ATP phosphoribosyltransferase activity by histidine. The protein is ATP phosphoribosyltransferase regulatory subunit of Synechococcus sp. (strain JA-2-3B'a(2-13)) (Cyanobacteria bacterium Yellowstone B-Prime).